The sequence spans 283 residues: Plasma membrane ascorbate-dependent reductase CYBRD1 (283 aa).

The Cytoplasmic portion of the chain corresponds to 1-5 (MEGYK). The chain crosses the membrane as a helical span at residues 6-30 (SFLVFLVSSLLLGFLGVIFTLVWVL). Residues 13–218 (SSLLLGFLGV…FGGLVVWMVT (206 aa)) enclose the Cytochrome b561 domain. Residues 31–45 (HWREGLGWDGGAAEF) are Extracellular-facing. The helical transmembrane segment at 46-67 (NWHPVLVTSGFIFIQGIAIIVY) threads the bilayer. Positions 48, 68, and 77 each coordinate heme b. The Cytoplasmic portion of the chain corresponds to 68 to 76 (RLPWTWNCS). Residues Lys-77 and Lys-81 each contribute to the L-ascorbate site. A helical membrane pass occupies residues 77-103 (KLLMKFIHAGLHLTAFVFTIVALVAVF). Residue His-84 participates in heme b binding. Residues 104-116 (DFHNAKNIPNMYS) are Extracellular-facing. A Fe(3+)-binding site is contributed by His-106. Heme b-binding positions include 113-116 (NMYS) and His-118. The helical transmembrane segment at 117–142 (LHSWIGLTVVILYALQLVLGVSIYLL) threads the bilayer. At 143-149 (PFARDTL) the chain is on the cytoplasmic side. Arg-150 contributes to the L-ascorbate binding site. A helical transmembrane segment spans residues 150-177 (RAALMPVHVYSGLLIFGTVIATALMGIT). 2 residues coordinate heme b: His-157 and Glu-178. Residues 178–195 (EKLIFSLKEPPYSKMPPE) are Extracellular-facing. The helical transmembrane segment at 196-220 (AIFVNTFGLIILVFGGLVVWMVTTP) threads the bilayer. Residues 221–283 (AWKRPREQEI…LDDAGQRSTM (63 aa)) lie on the Cytoplasmic side of the membrane. A heme b-binding site is contributed by Lys-223. A disordered region spans residues 234-263 (NPTVSSPDGTEEGSTITDCSNTEKSDVELN). A compositionally biased stretch (polar residues) spans 235–253 (PTVSSPDGTEEGSTITDCS). A compositionally biased stretch (basic and acidic residues) spans 254-263 (NTEKSDVELN).

In terms of assembly, homodimer. It depends on heme b as a cofactor.

The protein resides in the cell membrane. The protein localises to the apical cell membrane. It catalyses the reaction Fe(3+)(out) + L-ascorbate(in) = monodehydro-L-ascorbate radical(in) + Fe(2+)(out) + H(+). The catalysed reaction is Cu(2+)(out) + L-ascorbate(in) = Cu(+)(out) + monodehydro-L-ascorbate radical(in) + H(+). The enzyme catalyses monodehydro-L-ascorbate radical(out) + L-ascorbate(in) = monodehydro-L-ascorbate radical(in) + L-ascorbate(out). Plasma membrane reductase that uses cytoplasmic ascorbate as an electron donor to reduce extracellular Fe(3+) into Fe(2+). It is also able to reduce extracellular monodehydro-L-ascorbate and may be involved in extracellular ascorbate regeneration. May also function as a cupric transmembrane reductase. The sequence is that of Plasma membrane ascorbate-dependent reductase CYBRD1 (cybrd1) from Xenopus tropicalis (Western clawed frog).